We begin with the raw amino-acid sequence, 112 residues long: Carboxysome shell protein CcmK4 (112 aa).

The BMC domain maps to 6–92 (AVGSIETIGF…PHENVVAVLP (87 aa)).

This sequence belongs to the bacterial microcompartments protein family. CcmK subfamily. Homohexamer. Interacts with full-length CcmM. Forms mixed heterohexamers with CcmK3, probably with 1:5 CcmK3:CcmK4 stoichiometry. Only very weak interactions with CcmK1 and CcmK2 were seen.

It localises to the carboxysome. In terms of biological role, a probably minor shell protein component of the carboxysome, a polyhedral inclusion where RuBisCO (ribulose bisphosphate carboxylase, rbcL-rbcS) is sequestered. The central pore probably regulates metabolite flux, as might the gaps between assembled homohexamers. Homohexamers make sheets that probably form the facets of the polyhedral carboxysome. This subunit probably makes both homohexamers and heterohexamers with CcmK3. The chain is Carboxysome shell protein CcmK4 from Synechocystis sp. (strain ATCC 27184 / PCC 6803 / Kazusa).